The following is a 264-amino-acid chain: Regulatory protein RecX (264 aa).

Belongs to the RecX family.

Its subcellular location is the cytoplasm. Functionally, modulates RecA activity. This Limosilactobacillus reuteri (strain DSM 20016) (Lactobacillus reuteri) protein is Regulatory protein RecX.